We begin with the raw amino-acid sequence, 218 residues long: Type II restriction enzyme KpnI (218 aa).

The enzyme catalyses Endonucleolytic cleavage of DNA to give specific double-stranded fragments with terminal 5'-phosphates.. Functionally, a P subtype restriction enzyme that recognizes the double-stranded sequence 5'-GGTACC-3' and cleaves after C-5. In Klebsiella pneumoniae, this protein is Type II restriction enzyme KpnI.